The chain runs to 375 residues: Actin-binding Rho-activating protein (375 aa).

Residues Ala-37–Lys-101 form a disordered region. Over residues Pro-80–Lys-101 the composition is skewed to basic and acidic residues. Residues Ser-150 and Ser-182 each carry the phosphoserine modification. A disordered region spans residues Glu-175–Arg-197. Actin-binding stretches follow at residues Asp-193–Ala-293 and Lys-294–Glu-375. Interaction with actin stretches follow at residues Ser-234–Gly-279 and Met-346–Glu-375.

As to quaternary structure, binds F-actin and ABLIM1, ABLIM2 and ABLIM3. Interaction with ABLIM2 and ABLIM3 enhances activity. In terms of tissue distribution, predominantly expressed in heart and skeletal muscle, and expressed at lower levels in adrenal gland, brain, kidney, liver, and testis.

It localises to the cytoplasm. The protein resides in the myofibril. It is found in the sarcomere. Its subcellular location is the cytoskeleton. Acts as an activator of serum response factor (SRF)-dependent transcription possibly by inducing nuclear translocation of MKL1 or MKL2 and through a mechanism requiring Rho-actin signaling. This is Actin-binding Rho-activating protein from Rattus norvegicus (Rat).